Here is a 391-residue protein sequence, read N- to C-terminus: Succinyl-diaminopimelate desuccinylase (391 aa).

Histidine 78 contacts Zn(2+). Aspartate 80 is an active-site residue. Zn(2+) is bound at residue aspartate 111. The active-site Proton acceptor is the glutamate 145. Residues glutamate 146, glutamate 174, and histidine 360 each contribute to the Zn(2+) site.

This sequence belongs to the peptidase M20A family. DapE subfamily. As to quaternary structure, homodimer. Requires Zn(2+) as cofactor. It depends on Co(2+) as a cofactor.

The catalysed reaction is N-succinyl-(2S,6S)-2,6-diaminopimelate + H2O = (2S,6S)-2,6-diaminopimelate + succinate. Its pathway is amino-acid biosynthesis; L-lysine biosynthesis via DAP pathway; LL-2,6-diaminopimelate from (S)-tetrahydrodipicolinate (succinylase route): step 3/3. Catalyzes the hydrolysis of N-succinyl-L,L-diaminopimelic acid (SDAP), forming succinate and LL-2,6-diaminopimelate (DAP), an intermediate involved in the bacterial biosynthesis of lysine and meso-diaminopimelic acid, an essential component of bacterial cell walls. This is Succinyl-diaminopimelate desuccinylase from Acidovorax ebreus (strain TPSY) (Diaphorobacter sp. (strain TPSY)).